The chain runs to 1212 residues: MGKIKKILRKGPPATKRPPKAARTESADSALGLDAHSDLEKPATSSDDGFEEPTPKPKPSKKTTTLPGPVSIIAQKKNKFRTDDAKNVKPPTLEEMKELRDTRNLFHSNLFKLQVKEMLEELQLKTKYTEYIDNWMESFTVFTQRLKDGLVEKSQLEVPLNVDKKISGFIFSKPTKEPQLIGAASTGTLLGPKIVVDVALEMPKDCLHKDDYLNLIYDQKRALYLTYVTNQMRSDPAYSQDKFAFNYHGNNPLKPVLELTPAAKQVSKHLQLRLFITAPQSTFKPSRFVPWNNNIRPTYYNDEWDEEEALPSTQHYNASVLFDLTLAQNQALLDKAFKGRRNFQDGLLLLKVWLRQRELDRGFTGFGSHILASFIVYLNQQRILHQSSSSYQVARTVWNQLANTDWTNGITLAPASGQTEQLSTMAGYYDVCFMDVSGQLNLCANVPLGVYQRVRAEAKLAVDLLNDMKLNSFPYIFMQKCPLYTRVDNILKITNYSSIQQMLVLHSKPQMKYDFASYGYPQLLQILTELLQKGLKQRVQAILPIETVSSAWPVESKAPIIGQAIQLGLILDPEHAYEVLDKGPSSNDDPEGSAEFRKFWGEKSNLRRFQDGSITEAVVWGTTKDAPSKKRLIVRQIVMHLLEHHLQLDSKDIQYIAAELDLVYQLSPWFKVSKVKTKLELQQDTDAEALSPNVIRCYDDLARQLHALDDLPLEIVSISSISPVSRYCEPMPVLPQARMMADHIHASHIQRVIIQLGQSGKWPNELSALRALKTAFLIEIGEKLKAQCRLNWSITSEGLLVLKRGFCFLLELAHNKELALLKQEVTERGVTKYVDNPESRALEQRHYILPKVSGALHSLHQSHSAYGPTVLIAKRWLATQLLDDGIWPPMATELLVAHLYQQRNAPQAIAAPQTGFIRFLHLLAHSDWNGELFLLNFNSSWQEQQIGDLEHSFRSDRQSYPPLALATSYDQQHAGRLWTTGESPSLRILSHVSRLARHALEMIETSLQSKDLRFVRPAQLFRGSSEGYDLVIQLKSDLVPNALSYDLGSPFVSFDQPNYLLPRAGKDPLAAIVHQLRSAYSDYAAFFYNPHGGKELAIMWRPPAVFAPKAFKVTELQACTLCDKGKVQVVRETLVEDFKVLLKDFYLRISTPEELKREQREHQNPKRYFNAKPQDNESCSKSKKRKLAKAAKVQAPLKRKSLIKSRPLKSLS.

2 disordered regions span residues 1–72 and 1156–1212; these read MGKI…PVSI and KREQ…KSLS. The span at 1197–1212 shows a compositional bias: basic residues; sequence LKRKSLIKSRPLKSLS.

It belongs to the NRAP family. Part of the small subunit (SSU) processome, composed of more than 70 proteins and the RNA chaperone small nucleolar RNA (snoRNA) U3.

It is found in the nucleus. The protein localises to the nucleolus. The protein resides in the chromosome. Its function is as follows. Part of the small subunit (SSU) processome, first precursor of the small eukaryotic ribosomal subunit. During the assembly of the SSU processome in the nucleolus, many ribosome biogenesis factors, an RNA chaperone and ribosomal proteins associate with the nascent pre-rRNA and work in concert to generate RNA folding, modifications, rearrangements and cleavage as well as targeted degradation of pre-ribosomal RNA by the RNA exosome. The polypeptide is Nucleolar protein 6 (Drosophila pseudoobscura pseudoobscura (Fruit fly)).